A 194-amino-acid chain; its full sequence is Lymphocyte antigen 6 complex locus protein G5b (194 aa).

The N-terminal stretch at 1–18 (MRARVLVGMLTMVGFAMG) is a signal peptide. A UPAR/Ly6 domain is found at 26–118 (RTCHLCLLED…SAQHQSTLRG (93 aa)). 5 disulfides stabilise this stretch: Cys-28–Cys-55, Cys-31–Cys-40, Cys-47–Cys-73, Cys-81–Cys-98, and Cys-99–Cys-104. Asn-63 carries N-linked (GlcNAc...) asparagine glycosylation. N-linked (GlcNAc...) asparagine glycosylation is present at Asn-141.

Monomer. Post-translationally, N-glycosylated.

The protein resides in the secreted. In Mus musculus (Mouse), this protein is Lymphocyte antigen 6 complex locus protein G5b (Ly6g5b).